The primary structure comprises 139 residues: Endocuticle structural glycoprotein SgAbd-8 (139 aa).

Position 1 is a pyrrolidone carboxylic acid (Gln-1). O-linked (HexNAc...) threonine glycosylation occurs at Thr-14. Ser-15 carries an O-linked (HexNAc...) serine glycan. In terms of domain architecture, Chitin-binding type R&amp;R spans 29 to 99 (DGSYAWSYET…PEGAHLPTPP (71 aa)). The O-linked (HexNAc...) threonine glycan is linked to Thr-97. Residues 111 to 139 (FIASQPQQPGNNGGGQFPRPQPFPRPGAF) form a disordered region. Pro residues predominate over residues 129-139 (RPQPFPRPGAF).

Its function is as follows. Component of the abdominal endocuticle. This is Endocuticle structural glycoprotein SgAbd-8 from Schistocerca gregaria (Desert locust).